Here is a 96-residue protein sequence, read N- to C-terminus: uncharacterized protein (96 aa).

Residues 1–21 traverse the membrane as a helical segment; it reads MSDFEIIVGISSLLQVIILNI.

The protein resides in the membrane. This is an uncharacterized protein from Saccharomyces cerevisiae (strain ATCC 204508 / S288c) (Baker's yeast).